Here is a 473-residue protein sequence, read N- to C-terminus: Dol-P-Glc:Glc(2)Man(9)GlcNAc(2)-PP-Dol alpha-1,2-glucosyltransferase (473 aa).

Over 1 to 6 (MAQLEG) the chain is Cytoplasmic. Residues 7 to 27 (YYFSAALSCTFLVSCLLFSAF) traverse the membrane as a helical segment. Residues 28-64 (SRALREPYMDEIFHLPQAQRYCEGHFSLSQWDPMITT) lie on the Extracellular side of the membrane. The helical transmembrane segment at 65–85 (LPGLYLVSIGVIKPAIWIFGW) threads the bilayer. At 86 to 97 (SEHVVCSIGMLR) the chain is on the cytoplasmic side. A helical membrane pass occupies residues 98 to 118 (FVNLLFSVGNFYLLYLLFCKV). Topologically, residues 119–130 (QPRNKAASSIQR) are extracellular. Helical transmembrane passes span 131 to 151 (VLST…FLYY) and 152 to 172 (TEAG…YGNH). The Extracellular portion of the chain corresponds to 173–175 (KTS). A helical transmembrane segment spans residues 176-196 (AFLGFCGFMFRQTNIIWAVFC). Residues 197–249 (AGNVIAQKLTEAWKTELQKKEDRLPPIKGPFAEFRKILQFLLAYSMSFKNLSM) are Cytoplasmic-facing. A helical transmembrane segment spans residues 250–270 (LLLLTWPYILLGFLFCAFVVV). The Extracellular portion of the chain corresponds to 271-283 (NGGIVIGDRSSHE). The helical transmembrane segment at 284–304 (ACLHFPQLFYFFSFTLFFSFP) threads the bilayer. Residues 305-323 (HLLSPSKIKTFLSLVWKRR) are Cytoplasmic-facing. The chain crosses the membrane as a helical span at residues 324–344 (ILFFVVTLVSVFLVWKFTYAH). The Extracellular portion of the chain corresponds to 345 to 367 (KYLLADNRHYTFYVWKRVFQRYE). A helical membrane pass occupies residues 368 to 388 (TVKYLLVPAYIFAGWSIADSL). At 389–392 (KSKS) the chain is on the cytoplasmic side. The chain crosses the membrane as a helical span at residues 393–413 (IFWNLMFFICLFTVIVPQKLL). The Extracellular portion of the chain corresponds to 414–436 (EFRYFILPYVIYRLNIPLPPTSR). A helical transmembrane segment spans residues 437 to 457 (LICELSCYAVVNFITFFIFLN). Residues 458–473 (KTFQWPNSQDIQRFMW) are Cytoplasmic-facing.

The protein belongs to the ALG10 glucosyltransferase family.

The protein localises to the endoplasmic reticulum membrane. The catalysed reaction is an alpha-D-Glc-(1-&gt;3)-alpha-D-Glc-(1-&gt;3)-alpha-D-Man-(1-&gt;2)-alpha-D-Man-(1-&gt;2)-alpha-D-Man-(1-&gt;3)-[alpha-D-Man-(1-&gt;2)-alpha-D-Man-(1-&gt;3)-[alpha-D-Man-(1-&gt;2)-alpha-D-Man-(1-&gt;6)]-alpha-D-Man-(1-&gt;6)]-beta-D-Man-(1-&gt;4)-beta-D-GlcNAc-(1-&gt;4)-alpha-D-GlcNAc-diphospho-di-trans,poly-cis-dolichol + a di-trans,poly-cis-dolichyl beta-D-glucosyl phosphate = a alpha-D-Glc-(1-&gt;2)-alpha-D-Glc-(1-&gt;3)-alpha-D-Glc-(1-&gt;3)-alpha-D-Man-(1-&gt;2)-alpha-D-Man-(1-&gt;2)-alpha-D-Man-(1-&gt;3)-[alpha-D-Man-(1-&gt;2)-alpha-D-Man-(1-&gt;3)-[alpha-D-Man-(1-&gt;2)-alpha-D-Man-(1-&gt;6)]-alpha-D-Man-(1-&gt;6)]-beta-D-Man-(1-&gt;4)-beta-D-GlcNAc-(1-&gt;4)-alpha-D-GlcNAc-diphospho-di-trans,poly-cis-dolichol + a di-trans,poly-cis-dolichyl phosphate + H(+). It functions in the pathway protein modification; protein glycosylation. In terms of biological role, dol-P-Glc:Glc(2)Man(9)GlcNAc(2)-PP-Dol alpha-1,2-glucosyltransferase that operates in the biosynthetic pathway of dolichol-linked oligosaccharides, the glycan precursors employed in protein asparagine (N)-glycosylation. The assembly of dolichol-linked oligosaccharides begins on the cytosolic side of the endoplasmic reticulum membrane and finishes in its lumen. The sequential addition of sugars to dolichol pyrophosphate produces dolichol-linked oligosaccharides containing fourteen sugars, including two GlcNAcs, nine mannoses and three glucoses. Once assembled, the oligosaccharide is transferred from the lipid to nascent proteins by oligosaccharyltransferases. In the lumen of the endoplasmic reticulum, adds the third and last glucose residue from dolichyl phosphate glucose (Dol-P-Glc) onto the lipid-linked oligosaccharide intermediate Glc(2)Man(9)GlcNAc(2)-PP-Dol to produce Glc(3)Man(9)GlcNAc(2)-PP-Dol. The sequence is that of Dol-P-Glc:Glc(2)Man(9)GlcNAc(2)-PP-Dol alpha-1,2-glucosyltransferase from Homo sapiens (Human).